A 386-amino-acid chain; its full sequence is Patatin-06 (386 aa).

A signal peptide spans 1–23; sequence MATTKSFLILFFMILATTSSTCA. One can recognise a PNPLA domain in the interval 32 to 229; sequence LSIDGGGIKG…TVGDPALLSL (198 aa). The GXGXXG motif lies at 36-41; that stretch reads GGGIKG. The short motif at 75–79 is the GXSXG element; sequence GTSTG. The Nucleophile role is filled by Ser77. N-linked (GlcNAc...) asparagine glycosylation is present at Asn115. Asp215 serves as the catalytic Proton acceptor. Residues 215-217 carry the DGA/G motif; it reads DGG. Residues 321–384 adopt a coiled-coil conformation; that stretch reads ENALTGTTTE…NRKKLRANKA (64 aa).

It belongs to the patatin family. Tuber.

Its subcellular location is the vacuole. Its function is as follows. Probable lipolytic acyl hydrolase (LAH), an activity which is thought to be involved in the response of tubers to pathogens. This is Patatin-06 from Solanum tuberosum (Potato).